Reading from the N-terminus, the 247-residue chain is 5'-nucleotidase SurE (247 aa).

The a divalent metal cation site is built by Asp-8, Asp-9, Ser-39, and Asn-91.

It belongs to the SurE nucleotidase family. It depends on a divalent metal cation as a cofactor.

It is found in the cytoplasm. It catalyses the reaction a ribonucleoside 5'-phosphate + H2O = a ribonucleoside + phosphate. Its function is as follows. Nucleotidase that shows phosphatase activity on nucleoside 5'-monophosphates. The sequence is that of 5'-nucleotidase SurE from Azoarcus sp. (strain BH72).